The sequence spans 172 residues: 3-hydroxydecanoyl-[acyl-carrier-protein] dehydratase (172 aa).

His-71 is a catalytic residue.

The protein belongs to the thioester dehydratase family. FabA subfamily. In terms of assembly, homodimer.

Its subcellular location is the cytoplasm. It catalyses the reaction a (3R)-hydroxyacyl-[ACP] = a (2E)-enoyl-[ACP] + H2O. The enzyme catalyses (3R)-hydroxydecanoyl-[ACP] = (2E)-decenoyl-[ACP] + H2O. The catalysed reaction is (2E)-decenoyl-[ACP] = (3Z)-decenoyl-[ACP]. The protein operates within lipid metabolism; fatty acid biosynthesis. In terms of biological role, necessary for the introduction of cis unsaturation into fatty acids. Catalyzes the dehydration of (3R)-3-hydroxydecanoyl-ACP to E-(2)-decenoyl-ACP and then its isomerization to Z-(3)-decenoyl-ACP. Can catalyze the dehydratase reaction for beta-hydroxyacyl-ACPs with saturated chain lengths up to 16:0, being most active on intermediate chain length. The polypeptide is 3-hydroxydecanoyl-[acyl-carrier-protein] dehydratase (Brucella abortus (strain S19)).